The chain runs to 88 residues: uncharacterized protein (88 aa).

Belongs to the phD/YefM antitoxin family.

This is an uncharacterized protein from Sinorhizobium fredii (strain NBRC 101917 / NGR234).